The primary structure comprises 475 residues: Bifunctional protein HldE (475 aa).

A ribokinase region spans residues Met1–Thr318. Residue Asn195–Glu198 coordinates ATP. Asp264 is an active-site residue. Residues Met344–Gly475 are cytidylyltransferase.

In the N-terminal section; belongs to the carbohydrate kinase PfkB family. The protein in the C-terminal section; belongs to the cytidylyltransferase family. As to quaternary structure, homodimer.

The enzyme catalyses D-glycero-beta-D-manno-heptose 7-phosphate + ATP = D-glycero-beta-D-manno-heptose 1,7-bisphosphate + ADP + H(+). It carries out the reaction D-glycero-beta-D-manno-heptose 1-phosphate + ATP + H(+) = ADP-D-glycero-beta-D-manno-heptose + diphosphate. Its pathway is nucleotide-sugar biosynthesis; ADP-L-glycero-beta-D-manno-heptose biosynthesis; ADP-L-glycero-beta-D-manno-heptose from D-glycero-beta-D-manno-heptose 7-phosphate: step 1/4. It participates in nucleotide-sugar biosynthesis; ADP-L-glycero-beta-D-manno-heptose biosynthesis; ADP-L-glycero-beta-D-manno-heptose from D-glycero-beta-D-manno-heptose 7-phosphate: step 3/4. Its function is as follows. Catalyzes the phosphorylation of D-glycero-D-manno-heptose 7-phosphate at the C-1 position to selectively form D-glycero-beta-D-manno-heptose-1,7-bisphosphate. Catalyzes the ADP transfer from ATP to D-glycero-beta-D-manno-heptose 1-phosphate, yielding ADP-D-glycero-beta-D-manno-heptose. The chain is Bifunctional protein HldE from Aeromonas hydrophila subsp. hydrophila (strain ATCC 7966 / DSM 30187 / BCRC 13018 / CCUG 14551 / JCM 1027 / KCTC 2358 / NCIMB 9240 / NCTC 8049).